We begin with the raw amino-acid sequence, 2701 residues long: Centromere-associated protein E (2701 aa).

A Kinesin motor domain is found at Ala-6–Met-329. Gly-86–Thr-93 contributes to the ATP binding site. Residues Asn-336 to Arg-2590 adopt a coiled-coil conformation. A phosphoserine mark is found at Ser-611 and Ser-2083. The segment at Lys-2126–Lys-2476 is kinetochore-binding domain. Residues Ser-2355–Thr-2376 form a disordered region. Ser-2389 is modified (phosphoserine). Over residues Gln-2508 to Pro-2527 the composition is skewed to polar residues. Disordered stretches follow at residues Gln-2508–Gly-2533 and Lys-2588–Gln-2701. The globular autoinhibitory domain stretch occupies residues Gln-2510–Cys-2698. Basic and acidic residues predominate over residues Lys-2588–Val-2600. Residues Thr-2601–Gln-2625 show a composition bias toward polar residues. Positions Cys-2626–Pro-2640 are enriched in basic and acidic residues. A phosphoserine mark is found at Ser-2639, Ser-2647, and Ser-2651. Cys-2698 carries the post-translational modification Cysteine methyl ester. Cys-2698 carries S-farnesyl cysteine lipidation. The propeptide at Lys-2699–Gln-2701 is removed in mature form.

Belongs to the TRAFAC class myosin-kinesin ATPase superfamily. Kinesin family. Monomer. Interacts with CENPF. Interacts with BUB1B. Interacts with SEPT7. Interacts with KIF18A. Interacts with PRC1. Interacts with NUF2; this interaction determines kinetochore localization. Interacts with SKAP; this interaction greatly favors SKAP binding to microtubules. Interacts with TRAPPC12. Interacts with CTCF. In terms of processing, the C-terminal inhibitory domain is phosphorylated. Phosphorylation relieves autoinhibition of the kinetochore motor. Post-translationally, sumoylated with SUMO2 and SUMO3. The sumoylation mediates the association to the kinetochore.

Its subcellular location is the chromosome. The protein localises to the centromere. The protein resides in the kinetochore. It localises to the cytoplasm. It is found in the cytoskeleton. Its subcellular location is the spindle. Functionally, microtubule plus-end-directed kinetochore motor which plays an important role in chromosome congression, microtubule-kinetochore conjugation and spindle assembly checkpoint activation. Drives chromosome congression (alignment of chromosomes at the spindle equator resulting in the formation of the metaphase plate) by mediating the lateral sliding of polar chromosomes along spindle microtubules towards the spindle equator and by aiding the establishment and maintenance of connections between kinetochores and spindle microtubules. The transport of pole-proximal chromosomes towards the spindle equator is favored by microtubule tracks that are detyrosinated. Acts as a processive bi-directional tracker of dynamic microtubule tips; after chromosomes have congressed, continues to play an active role at kinetochores, enhancing their links with dynamic microtubule ends. Suppresses chromosome congression in NDC80-depleted cells and contributes positively to congression only when microtubules are stabilized. Plays an important role in the formation of stable attachments between kinetochores and spindle microtubules The stabilization of kinetochore-microtubule attachment also requires CENPE-dependent localization of other proteins to the kinetochore including BUB1B, MAD1 and MAD2. Plays a role in spindle assembly checkpoint activation (SAC) via its interaction with BUB1B resulting in the activation of its kinase activity, which is important for activating SAC. Necessary for the mitotic checkpoint signal at individual kinetochores to prevent aneuploidy due to single chromosome loss. The chain is Centromere-associated protein E (CENPE) from Homo sapiens (Human).